We begin with the raw amino-acid sequence, 1035 residues long: FERM domain-containing protein 4B (1035 aa).

The region spanning 59 to 361 is the FERM domain; that stretch reads RHCQVHLLDD…SQHQFYLDRK (303 aa). Residue Ser372 is modified to Phosphoserine. Coiled-coil stretches lie at residues 414 to 451 and 535 to 559; these read QDSE…LKKI and KQDY…RIRC. A necessary for adherens junction and tight junction localization region spans residues 542–972; sequence VKRLQEIENS…TQLTIGLSEY (431 aa). 4 disordered regions span residues 563-615, 631-699, 713-738, and 754-798; these read PSQK…ILPP, NEQF…LESQ, FTLS…SQSS, and TQTL…SKGQ. The span at 571–590 shows a compositional bias: low complexity; sequence PPEDIIPSESSSLSDTTTYD. Residues 594 to 607 show a composition bias toward polar residues; that stretch reads DSFTLAGQRPSSVP. Residue Ser609 is modified to Phosphoserine. Positions 635 to 644 are enriched in basic and acidic residues; that stretch reads MDTRHSREML. Composition is skewed to polar residues over residues 664–699 and 715–725; these read MPTT…LESQ and LSKSQRSSSTE. Ser698 carries the phosphoserine modification. Positions 762–771 are enriched in basic residues; sequence RGRRRSKKHS. Residues 772–782 show a composition bias toward polar residues; that stretch reads VSTSNSGSMPN. Lys883 is covalently cross-linked (Glycyl lysine isopeptide (Lys-Gly) (interchain with G-Cter in SUMO2)). 3 disordered regions span residues 906 to 926, 939 to 958, and 994 to 1035; these read RASG…SDRG, PCSP…TNAS, and PSRQ…GTLV. The segment covering 907–921 has biased composition (polar residues); that stretch reads ASGQKDQGHSPQTSF. Position 916 is a phosphoserine (Ser916). A compositionally biased stretch (low complexity) spans 941–958; the sequence is SPSSRASSYSSVSSTNAS. Positions 1019-1035 are enriched in basic and acidic residues; sequence SEQRLFWHEDSKPGTLV. Residue Lys1030 forms a Glycyl lysine isopeptide (Lys-Gly) (interchain with G-Cter in SUMO2) linkage.

Interacts with CYTH3. Interacts with PARD3. Interacts with CYTH1. As to expression, isoform 1 is expressed in the brain. Isoform 2 is expressed in the lung (at protein level).

The protein localises to the cytoplasm. The protein resides in the cytoskeleton. Its subcellular location is the cell junction. It localises to the tight junction. It is found in the adherens junction. Member of GRP1 signaling complexes that are acutely recruited to plasma membrane ruffles in response to insulin receptor signaling. May function as a scaffolding protein that regulates epithelial cell polarity by connecting ARF6 activation with the PAR3 complex. Plays a redundant role with FRMD4A in epithelial polarization. This is FERM domain-containing protein 4B (Frmd4b) from Mus musculus (Mouse).